Consider the following 437-residue polypeptide: GTPase Der (437 aa).

2 EngA-type G domains span residues 4-168 and 177-352; these read PVVA…PAED and IRVS…QAHS. Residues 10–17, 57–61, 120–123, 183–190, 230–234, and 295–298 each bind GTP; these read GRPNVGKS, DTGGI, NKAD, DTAGM, and NKWD. The KH-like domain maps to 353-437; that stretch reads MRIPTAVLND…PVRIWTRKKT (85 aa).

The protein belongs to the TRAFAC class TrmE-Era-EngA-EngB-Septin-like GTPase superfamily. EngA (Der) GTPase family. Associates with the 50S ribosomal subunit.

Its function is as follows. GTPase that plays an essential role in the late steps of ribosome biogenesis. In Brevibacillus brevis (strain 47 / JCM 6285 / NBRC 100599), this protein is GTPase Der.